The following is a 336-amino-acid chain: Atypical chemokine receptor 1 (336 aa).

The Extracellular portion of the chain corresponds to 1–63; the sequence is MGNCLHPAEL…CNLLDDSALP (63 aa). N16, N27, and N33 each carry an N-linked (GlcNAc...) asparagine glycan. 2 cysteine pairs are disulfide-bonded: C51–C276 and C129–C195. The helical transmembrane segment at 64–84 threads the bilayer; it reads FFILVSVLGILASGIVLFMFF. Topologically, residues 85 to 95 are cytoplasmic; the sequence is RPLFHWQLCPG. A helical membrane pass occupies residues 96–116; that stretch reads WPVLAQLAVGSALFSIVVPIL. Over 117–129 the chain is Extracellular; that stretch reads APGLGNTRSSALC. The chain crosses the membrane as a helical span at residues 130-153; that stretch reads SLGYCVWYGSAFAQALLLGCHASL. Over 154 to 166 the chain is Cytoplasmic; sequence GPKLGADQVPGLT. A helical membrane pass occupies residues 167 to 187; sequence LGLSVGLWGVAALLTLPVTLA. The Extracellular segment spans residues 188-207; that stretch reads SGASGGLCTPVYSMELKALQ. A helical transmembrane segment spans residues 208–228; the sequence is ATHAVACLAIFVLLPLGLFGA. At 229–244 the chain is on the cytoplasmic side; it reads KGLKKALGMGPGPWMN. A helical membrane pass occupies residues 245–265; that stretch reads ILWAWFIFWWPHGVVLGLDFL. Topologically, residues 266-287 are extracellular; the sequence is VRSKLLLLSTCLAQQALDLLLN. The helical transmembrane segment at 288 to 308 threads the bilayer; the sequence is LAEALAILHCVATPLLLALFC. Residues 309-336 lie on the Cytoplasmic side of the membrane; it reads HQATRTLLPSLPLPEGWSSHLDTLGSKS.

This sequence belongs to the G-protein coupled receptor 1 family. Atypical chemokine receptor subfamily.

The protein resides in the early endosome. It localises to the recycling endosome. Its subcellular location is the membrane. Its function is as follows. Atypical chemokine receptor that controls chemokine levels and localization via high-affinity chemokine binding that is uncoupled from classic ligand-driven signal transduction cascades, resulting instead in chemokine sequestration, degradation, or transcytosis. Also known as interceptor (internalizing receptor) or chemokine-scavenging receptor or chemokine decoy receptor. Has a promiscuous chemokine-binding profile, interacting with inflammatory chemokines of both the CXC and the CC subfamilies but not with homeostatic chemokines. Acts as a receptor for chemokines including CCL2, CCL5, CCL7, CCL11, CCL13, CCL14, CCL17, CXCL5, CXCL6, IL8/CXCL8, CXCL11, GRO, RANTES, MCP-1 and TARC. May regulate chemokine bioavailability and, consequently, leukocyte recruitment through two distinct mechanisms: when expressed in endothelial cells, it sustains the abluminal to luminal transcytosis of tissue-derived chemokines and their subsequent presentation to circulating leukocytes; when expressed in erythrocytes, serves as blood reservoir of cognate chemokines but also as a chemokine sink, buffering potential surges in plasma chemokine levels. The chain is Atypical chemokine receptor 1 (ACKR1) from Papio hamadryas (Hamadryas baboon).